The chain runs to 198 residues: Peptidyl-tRNA hydrolase (198 aa).

Tyr-18 contributes to the tRNA binding site. His-23 (proton acceptor) is an active-site residue. Phe-69, Asn-71, and Asn-117 together coordinate tRNA.

This sequence belongs to the PTH family. As to quaternary structure, monomer.

The protein localises to the cytoplasm. It catalyses the reaction an N-acyl-L-alpha-aminoacyl-tRNA + H2O = an N-acyl-L-amino acid + a tRNA + H(+). Functionally, hydrolyzes ribosome-free peptidyl-tRNAs (with 1 or more amino acids incorporated), which drop off the ribosome during protein synthesis, or as a result of ribosome stalling. Its function is as follows. Catalyzes the release of premature peptidyl moieties from peptidyl-tRNA molecules trapped in stalled 50S ribosomal subunits, and thus maintains levels of free tRNAs and 50S ribosomes. In Idiomarina loihiensis (strain ATCC BAA-735 / DSM 15497 / L2-TR), this protein is Peptidyl-tRNA hydrolase.